Consider the following 704-residue polypeptide: Tetratricopeptide repeat protein 12 (704 aa).

Thr-71 is subject to Phosphothreonine. 3 TPR repeats span residues 105-138 (ADALKEKGNEAFVRGDYETAIFFYSEGLGKLKDM), 139-172 (KVLYTNRAQAFIKLGDYQKALVDCDWALKCDENC), and 173-206 (TKAYFHMGKAHVALKNYSKAKECYQKIEEINPKL).

The protein localises to the cytoplasm. Its function is as follows. Cytoplasmic protein that plays a role in the proper assembly of dynein arm complexes in motile cilia in both respiratory cells and sperm flagella. The sequence is that of Tetratricopeptide repeat protein 12 (Ttc12) from Mus musculus (Mouse).